We begin with the raw amino-acid sequence, 175 residues long: Crossover junction endodeoxyribonuclease RuvC (175 aa).

Active-site residues include D16, E76, and D148. Positions 16, 76, and 148 each coordinate Mg(2+).

It belongs to the RuvC family. As to quaternary structure, homodimer which binds Holliday junction (HJ) DNA. The HJ becomes 2-fold symmetrical on binding to RuvC with unstacked arms; it has a different conformation from HJ DNA in complex with RuvA. In the full resolvosome a probable DNA-RuvA(4)-RuvB(12)-RuvC(2) complex forms which resolves the HJ. It depends on Mg(2+) as a cofactor.

It localises to the cytoplasm. It carries out the reaction Endonucleolytic cleavage at a junction such as a reciprocal single-stranded crossover between two homologous DNA duplexes (Holliday junction).. Functionally, the RuvA-RuvB-RuvC complex processes Holliday junction (HJ) DNA during genetic recombination and DNA repair. Endonuclease that resolves HJ intermediates. Cleaves cruciform DNA by making single-stranded nicks across the HJ at symmetrical positions within the homologous arms, yielding a 5'-phosphate and a 3'-hydroxyl group; requires a central core of homology in the junction. The consensus cleavage sequence is 5'-(A/T)TT(C/G)-3'. Cleavage occurs on the 3'-side of the TT dinucleotide at the point of strand exchange. HJ branch migration catalyzed by RuvA-RuvB allows RuvC to scan DNA until it finds its consensus sequence, where it cleaves and resolves the cruciform DNA. The sequence is that of Crossover junction endodeoxyribonuclease RuvC from Bradyrhizobium diazoefficiens (strain JCM 10833 / BCRC 13528 / IAM 13628 / NBRC 14792 / USDA 110).